A 610-amino-acid chain; its full sequence is Elongation factor 4 (610 aa).

In terms of domain architecture, tr-type G spans 11 to 193; it reads EKIRNFSIIA…QIVEKVPAPT (183 aa). Residues 23 to 28 and 140 to 143 contribute to the GTP site; these read DHGKST and NKID.

It belongs to the TRAFAC class translation factor GTPase superfamily. Classic translation factor GTPase family. LepA subfamily.

It localises to the cell membrane. It catalyses the reaction GTP + H2O = GDP + phosphate + H(+). Required for accurate and efficient protein synthesis under certain stress conditions. May act as a fidelity factor of the translation reaction, by catalyzing a one-codon backward translocation of tRNAs on improperly translocated ribosomes. Back-translocation proceeds from a post-translocation (POST) complex to a pre-translocation (PRE) complex, thus giving elongation factor G a second chance to translocate the tRNAs correctly. Binds to ribosomes in a GTP-dependent manner. In Streptococcus suis (strain 98HAH33), this protein is Elongation factor 4.